The following is a 194-amino-acid chain: 7-methyl-GTP pyrophosphatase (194 aa).

The active-site Proton acceptor is the D70.

The protein belongs to the Maf family. YceF subfamily. Requires a divalent metal cation as cofactor.

It is found in the cytoplasm. The catalysed reaction is N(7)-methyl-GTP + H2O = N(7)-methyl-GMP + diphosphate + H(+). Functionally, nucleoside triphosphate pyrophosphatase that hydrolyzes 7-methyl-GTP (m(7)GTP). May have a dual role in cell division arrest and in preventing the incorporation of modified nucleotides into cellular nucleic acids. The chain is 7-methyl-GTP pyrophosphatase from Vibrio vulnificus (strain YJ016).